The following is a 399-amino-acid chain: Mannan endo-1,4-beta-mannosidase 4 (399 aa).

A signal peptide spans 1 to 26 (MNNSIILIFVAILIIFPNEFSKPTRA). The substrate site is built by Trp-88 and Asn-203. Glu-204 (proton donor) is an active-site residue. Tyr-279 is a binding site for substrate. The Nucleophile role is filled by Glu-318. Cys-347 and Cys-354 form a disulfide bridge. Trp-360 is a binding site for substrate.

Belongs to the glycosyl hydrolase 5 (cellulase A) family. In terms of tissue distribution, expressed in flowers and fruit pericarp.

The protein localises to the secreted. The catalysed reaction is Random hydrolysis of (1-&gt;4)-beta-D-mannosidic linkages in mannans, galactomannans and glucomannans.. Its function is as follows. Possesses endo-beta-mannanase and mannan transglycosylase activities. May be involved in cell wall degradation during fruit ripening. The protein is Mannan endo-1,4-beta-mannosidase 4 (MAN4) of Solanum lycopersicum (Tomato).